The chain runs to 508 residues: Photosystem II CP47 reaction center protein (508 aa).

A run of 6 helical transmembrane segments spans residues 21–36 (AVHI…WAGS), 101–115 (IVFS…IWHW), 140–156 (GIHL…FGAF), 203–218 (IAAG…FHLS), 237–252 (VLSS…AFVV), and 457–472 (TFAL…HGAR).

It belongs to the PsbB/PsbC family. PsbB subfamily. In terms of assembly, PSII is composed of 1 copy each of membrane proteins PsbA, PsbB, PsbC, PsbD, PsbE, PsbF, PsbH, PsbI, PsbJ, PsbK, PsbL, PsbM, PsbT, PsbX, PsbY, PsbZ, Psb30/Ycf12, at least 3 peripheral proteins of the oxygen-evolving complex and a large number of cofactors. It forms dimeric complexes. Binds multiple chlorophylls. PSII binds additional chlorophylls, carotenoids and specific lipids. serves as cofactor.

It is found in the plastid. The protein resides in the chloroplast thylakoid membrane. In terms of biological role, one of the components of the core complex of photosystem II (PSII). It binds chlorophyll and helps catalyze the primary light-induced photochemical processes of PSII. PSII is a light-driven water:plastoquinone oxidoreductase, using light energy to abstract electrons from H(2)O, generating O(2) and a proton gradient subsequently used for ATP formation. This chain is Photosystem II CP47 reaction center protein, found in Triticum aestivum (Wheat).